The chain runs to 134 residues: Protein NrdI (134 aa).

This sequence belongs to the NrdI family.

Its function is as follows. Probably involved in ribonucleotide reductase function. This Rhizobium leguminosarum bv. trifolii (strain WSM2304) protein is Protein NrdI.